The primary structure comprises 304 residues: Aspartate carbamoyltransferase catalytic subunit (304 aa).

Arg54 and Thr55 together coordinate carbamoyl phosphate. Lys83 lines the L-aspartate pocket. Carbamoyl phosphate contacts are provided by Arg104, His132, and Gln135. L-aspartate is bound by residues Arg165 and Arg226. 2 residues coordinate carbamoyl phosphate: Leu265 and Pro266.

This sequence belongs to the aspartate/ornithine carbamoyltransferase superfamily. ATCase family. Heterooligomer of catalytic and regulatory chains.

It carries out the reaction carbamoyl phosphate + L-aspartate = N-carbamoyl-L-aspartate + phosphate + H(+). It functions in the pathway pyrimidine metabolism; UMP biosynthesis via de novo pathway; (S)-dihydroorotate from bicarbonate: step 2/3. Catalyzes the condensation of carbamoyl phosphate and aspartate to form carbamoyl aspartate and inorganic phosphate, the committed step in the de novo pyrimidine nucleotide biosynthesis pathway. This is Aspartate carbamoyltransferase catalytic subunit from Pyrobaculum islandicum (strain DSM 4184 / JCM 9189 / GEO3).